Here is a 145-residue protein sequence, read N- to C-terminus: Copper transporter 6 (145 aa).

Helical transmembrane passes span 47 to 67 (LGMY…VEWL) and 99 to 119 (YLVM…AIAG).

It belongs to the copper transporter (Ctr) (TC 1.A.56) family. SLC31A subfamily.

It localises to the membrane. Its function is as follows. Involved in the transport of copper. This chain is Copper transporter 6 (COPT6), found in Arabidopsis thaliana (Mouse-ear cress).